The primary structure comprises 194 residues: Imidazoleglycerol-phosphate dehydratase (194 aa).

This sequence belongs to the imidazoleglycerol-phosphate dehydratase family.

The protein localises to the cytoplasm. The enzyme catalyses D-erythro-1-(imidazol-4-yl)glycerol 3-phosphate = 3-(imidazol-4-yl)-2-oxopropyl phosphate + H2O. Its pathway is amino-acid biosynthesis; L-histidine biosynthesis; L-histidine from 5-phospho-alpha-D-ribose 1-diphosphate: step 6/9. The sequence is that of Imidazoleglycerol-phosphate dehydratase from Bacillus cereus (strain AH820).